The primary structure comprises 65 residues: MPKMKTNSGSKKRFTLTGTGKIKRKHAFHSHILTKKSKKRKRNLCYSTTVDTTNVSQVKELLAMK.

Positions 1 to 20 are disordered; it reads MPKMKTNSGSKKRFTLTGTG.

It belongs to the bacterial ribosomal protein bL35 family.

This chain is Large ribosomal subunit protein bL35, found in Bacteroides thetaiotaomicron (strain ATCC 29148 / DSM 2079 / JCM 5827 / CCUG 10774 / NCTC 10582 / VPI-5482 / E50).